The primary structure comprises 144 residues: Large ribosomal subunit protein uL15 (144 aa).

The disordered stretch occupies residues 1-48 (MRLNTLSPAAGSKSAAKRVGRGIGSGTGKTCGRGHKGQKSRSGGGVRI). Gly residues predominate over residues 21–31 (RGIGSGTGKTC).

It belongs to the universal ribosomal protein uL15 family. As to quaternary structure, part of the 50S ribosomal subunit.

Functionally, binds to the 23S rRNA. The polypeptide is Large ribosomal subunit protein uL15 (Shewanella woodyi (strain ATCC 51908 / MS32)).